The sequence spans 1503 residues: Protein Skeletor, isoforms D/E (1503 aa).

Positions M1–A28 are cleaved as a signal peptide. 2 DM13 domains span residues G34–P143 and P151–P258. The DOMON domain maps to L287 to G419. 4 disordered regions span residues P451–P491, N830–I857, I1086–S1106, and E1426–A1503. Low complexity predominate over residues N830–Q840. Low complexity predominate over residues S1452–T1491.

In terms of assembly, interacts with Chro and Mgtor as part of a macromolecular complex forming the spindle matrix. Chro colocalizes with Skeletor (Skel) on the chromosomes at interphase and on spindle during metaphase.

It localises to the cytoplasm. The protein resides in the cytoskeleton. Its subcellular location is the spindle. The protein localises to the nucleus. It is found in the nucleolus. It localises to the chromosome. Its function is as follows. Provides structural support to stabilize and organize the microtubule spindle during mitosis (within embryonic somatic cells) and meiosis (within spermatocytes). The role in mitosis regulation depends on the Ran pathway. The chain is Protein Skeletor, isoforms D/E from Drosophila melanogaster (Fruit fly).